The following is a 144-amino-acid chain: Small ribosomal subunit protein bS6 (144 aa).

Residues 97 to 144 are disordered; the sequence is EEGPSAMMRKADRDRERDERGGPREGGFRSERGPRRPREEETTASVEE. Residues 105 to 137 are compositionally biased toward basic and acidic residues; sequence RKADRDRERDERGGPREGGFRSERGPRRPREEE.

The protein belongs to the bacterial ribosomal protein bS6 family.

Binds together with bS18 to 16S ribosomal RNA. In Afipia carboxidovorans (strain ATCC 49405 / DSM 1227 / KCTC 32145 / OM5) (Oligotropha carboxidovorans), this protein is Small ribosomal subunit protein bS6.